A 201-amino-acid chain; its full sequence is Basic helix-loop-helix transcription factor scleraxis (201 aa).

Disordered stretches follow at residues 1–92 (MSFA…NSVN) and 148–177 (AFFH…QPKQ). The span at 59 to 69 (RRAGGGGPGGR) shows a compositional bias: gly residues. Positions 70–88 (PGREPRQRHTANARERDRT) are enriched in basic and acidic residues. The region spanning 75–127 (RQRHTANARERDRTNSVNTAFTALRTLIPTEPADRKLSKIETLRLASSYISHL) is the bHLH domain. A compositionally biased stretch (pro residues) spans 157-167 (SPPPPPPPPPA).

As to quaternary structure, efficient DNA binding requires dimerization with another bHLH protein. Dimerizes and binds the E-box consensus sequence with E12.

The protein resides in the nucleus. In terms of biological role, plays an early essential role in mesoderm formation, as well as a later role in formation of somite-derived chondrogenic lineages. This chain is Basic helix-loop-helix transcription factor scleraxis (SCX), found in Homo sapiens (Human).